We begin with the raw amino-acid sequence, 435 residues long: MNTVHAKGNVLNKIGIPSHMVWGYIGVVIFMVGDGLEQGWLSPFLVDHGLSMQQSASLFTMYGIAVTISAWLSGTFVQTWGPRKTMTVGLLAFILGSAAFIGWAIPHMYYPALLGSYALRGLGYPLFAYSFLVWVSYSTSQNILGKAVGWFWFMFTCGLNVLGPFYSSYAVPAFGEINTLWSALLFVAAGGILALFFNKDKFTPIQKQDQPKWKELSKAFTIMFENPKVGIGGVVKTINAIGQFGFAIFLPTYLARYGYSVSEWLQIWGTLFFVNIVFNIIFGAVGDKLGWRNTVMWFGGVGCGIFTLALYYTPQLIGHQYWVLMIIACCYGAALAGYVPLSALLPTLAPDNKGAAMSVLNLGSGLCAFIAPGIVSLFIGPLGAGGVIWIFAALYFFSAFLTRFLTISEQSTDVYTEERFVRENVQTNFDKTVKQ.

Topologically, residues 1 to 13 (MNTVHAKGNVLNK) are cytoplasmic. A helical transmembrane segment spans residues 14 to 34 (IGIPSHMVWGYIGVVIFMVGD). Residues 35 to 56 (GLEQGWLSPFLVDHGLSMQQSA) are Extracellular-facing. The helical transmembrane segment at 57-77 (SLFTMYGIAVTISAWLSGTFV) threads the bilayer. Topologically, residues 78–85 (QTWGPRKT) are cytoplasmic. Residues 86-106 (MTVGLLAFILGSAAFIGWAIP) traverse the membrane as a helical segment. At 107-112 (HMYYPA) the chain is on the extracellular side. The chain crosses the membrane as a helical span at residues 113 to 133 (LLGSYALRGLGYPLFAYSFLV). Over 134 to 142 (WVSYSTSQN) the chain is Cytoplasmic. A helical transmembrane segment spans residues 143-163 (ILGKAVGWFWFMFTCGLNVLG). Residues 164 to 176 (PFYSSYAVPAFGE) are Extracellular-facing. Residues 177–197 (INTLWSALLFVAAGGILALFF) traverse the membrane as a helical segment. At 198-228 (NKDKFTPIQKQDQPKWKELSKAFTIMFENPK) the chain is on the cytoplasmic side. The helical transmembrane segment at 229–249 (VGIGGVVKTINAIGQFGFAIF) threads the bilayer. Over 250-264 (LPTYLARYGYSVSEW) the chain is Extracellular. A helical membrane pass occupies residues 265-285 (LQIWGTLFFVNIVFNIIFGAV). The Cytoplasmic portion of the chain corresponds to 286–293 (GDKLGWRN). Residues 294–314 (TVMWFGGVGCGIFTLALYYTP) form a helical membrane-spanning segment. Residues 315–320 (QLIGHQ) are Extracellular-facing. Residues 321 to 341 (YWVLMIIACCYGAALAGYVPL) form a helical membrane-spanning segment. The Cytoplasmic segment spans residues 342 to 354 (SALLPTLAPDNKG). The chain crosses the membrane as a helical span at residues 355-375 (AAMSVLNLGSGLCAFIAPGIV). A topological domain (extracellular) is located at residue S376. A helical membrane pass occupies residues 377–397 (LFIGPLGAGGVIWIFAALYFF). Residues 398-435 (SAFLTRFLTISEQSTDVYTEERFVRENVQTNFDKTVKQ) lie on the Cytoplasmic side of the membrane.

It belongs to the major facilitator superfamily. Sugar transporter (TC 2.A.1.1) family. CsbX subfamily.

It is found in the cell membrane. The polypeptide is Alpha-ketoglutarate permease (csbX) (Bacillus subtilis (strain 168)).